A 407-amino-acid chain; its full sequence is Peptidase T (407 aa).

Histidine 82 serves as a coordination point for Zn(2+). Aspartate 84 is a catalytic residue. Aspartate 143 is a Zn(2+) binding site. Glutamate 177 acts as the Proton acceptor in catalysis. Glutamate 178, aspartate 200, and histidine 382 together coordinate Zn(2+).

The protein belongs to the peptidase M20B family. The cofactor is Zn(2+).

Its subcellular location is the cytoplasm. It catalyses the reaction Release of the N-terminal residue from a tripeptide.. Functionally, cleaves the N-terminal amino acid of tripeptides. The protein is Peptidase T of Streptococcus thermophilus (strain CNRZ 1066).